A 553-amino-acid chain; its full sequence is Carboxypeptidase Y homolog A (553 aa).

Residues 1 to 17 form the signal peptide; sequence MRVLSTTLLIGAAAAAV. Positions 18 to 134 are excised as a propeptide; it reads SPPQQVLQAP…RLEAFDLRVK (117 aa). Intrachain disulfides connect Cys-189–Cys-428, Cys-323–Cys-337, Cys-347–Cys-370, Cys-354–Cys-363, and Cys-392–Cys-398. A glycan (N-linked (GlcNAc...) asparagine) is linked at Asn-220. Ser-276 is a catalytic residue. Asp-467 is an active-site residue. Residue Asn-518 is glycosylated (N-linked (GlcNAc...) asparagine). The active site involves His-529.

It belongs to the peptidase S10 family.

It localises to the vacuole. The enzyme catalyses Release of a C-terminal amino acid with broad specificity.. Vacuolar carboxypeptidase involved in degradation of small peptides. Digests preferentially peptides containing an aliphatic or hydrophobic residue in P1' position, as well as methionine, leucine or phenylalanine in P1 position of ester substrate. The chain is Carboxypeptidase Y homolog A (cpyA) from Talaromyces stipitatus (strain ATCC 10500 / CBS 375.48 / QM 6759 / NRRL 1006) (Penicillium stipitatum).